A 342-amino-acid chain; its full sequence is Phosphoribosylformylglycinamidine cyclo-ligase (342 aa).

The protein belongs to the AIR synthase family.

The protein resides in the cytoplasm. It carries out the reaction 2-formamido-N(1)-(5-O-phospho-beta-D-ribosyl)acetamidine + ATP = 5-amino-1-(5-phospho-beta-D-ribosyl)imidazole + ADP + phosphate + H(+). It participates in purine metabolism; IMP biosynthesis via de novo pathway; 5-amino-1-(5-phospho-D-ribosyl)imidazole from N(2)-formyl-N(1)-(5-phospho-D-ribosyl)glycinamide: step 2/2. This Staphylococcus saprophyticus subsp. saprophyticus (strain ATCC 15305 / DSM 20229 / NCIMB 8711 / NCTC 7292 / S-41) protein is Phosphoribosylformylglycinamidine cyclo-ligase.